We begin with the raw amino-acid sequence, 241 residues long: Kynurenine formamidase (241 aa).

Residues 23–27 (HGGAW) carry the HGGXW motif. The active-site Nucleophile is the Ser95. Catalysis depends on residues Asp191 and His223.

Belongs to the kynurenine formamidase family. As to quaternary structure, homodimer.

The catalysed reaction is N-formyl-L-kynurenine + H2O = L-kynurenine + formate + H(+). It participates in amino-acid degradation; L-tryptophan degradation via kynurenine pathway; L-kynurenine from L-tryptophan: step 2/2. Its function is as follows. Catalyzes the hydrolysis of N-formyl-L-kynurenine to L-kynurenine, the second step in the kynurenine pathway of tryptophan degradation. Kynurenine may be further oxidized to nicotinic acid, NAD(H) and NADP(H). Required for elimination of toxic metabolites. The polypeptide is Kynurenine formamidase (Eremothecium gossypii (strain ATCC 10895 / CBS 109.51 / FGSC 9923 / NRRL Y-1056) (Yeast)).